Reading from the N-terminus, the 908-residue chain is Protein translocase subunit SecA (908 aa).

Residues Q87, 105–109 (GEGKT), and D513 contribute to the ATP site. Residues 852 to 863 (ARRAQAQHATAE) are compositionally biased toward low complexity. Positions 852 to 908 (ARRAQAQHATAENQLADDEAEAASPQTVVRDERKVGRNEPCPCGSGKKYKQCHGKID) are disordered. 4 residues coordinate Zn(2+): C892, C894, C903, and H904. Over residues 898-908 (KKYKQCHGKID) the composition is skewed to basic residues.

This sequence belongs to the SecA family. Monomer and homodimer. Part of the essential Sec protein translocation apparatus which comprises SecA, SecYEG and auxiliary proteins SecDF-YajC and YidC. Zn(2+) is required as a cofactor.

The protein localises to the cell inner membrane. Its subcellular location is the cytoplasm. It carries out the reaction ATP + H2O + cellular proteinSide 1 = ADP + phosphate + cellular proteinSide 2.. Part of the Sec protein translocase complex. Interacts with the SecYEG preprotein conducting channel. Has a central role in coupling the hydrolysis of ATP to the transfer of proteins into and across the cell membrane, serving both as a receptor for the preprotein-SecB complex and as an ATP-driven molecular motor driving the stepwise translocation of polypeptide chains across the membrane. The sequence is that of Protein translocase subunit SecA from Vibrio atlanticus (strain LGP32) (Vibrio splendidus (strain Mel32)).